A 315-amino-acid chain; its full sequence is Replication factor C small subunit (315 aa).

Residue 43–50 (GSPGVGKT) participates in ATP binding.

The protein belongs to the activator 1 small subunits family. RfcS subfamily. As to quaternary structure, heteromultimer composed of small subunits (RfcS) and large subunits (RfcL).

Part of the RFC clamp loader complex which loads the PCNA sliding clamp onto DNA. The chain is Replication factor C small subunit from Methanococcus maripaludis (strain C6 / ATCC BAA-1332).